A 329-amino-acid polypeptide reads, in one-letter code: Cathepsin K (329 aa).

An N-terminal signal peptide occupies residues 1-15; sequence MWGLKVLLLPVMSFA. Residues 16 to 114 constitute a propeptide, activation peptide; that stretch reads LYPEEILDTH…TLYIPDWEGR (99 aa). Residue N103 is glycosylated (N-linked (GlcNAc...) asparagine). 3 disulfide bridges follow: C136-C177, C170-C210, and C269-C318. The active site involves C139. Active-site residues include H276 and N296.

It belongs to the peptidase C1 family.

Its subcellular location is the lysosome. The protein resides in the secreted. The protein localises to the apical cell membrane. The catalysed reaction is Broad proteolytic activity. With small-molecule substrates and inhibitors, the major determinant of specificity is P2, which is preferably Leu, Met &gt; Phe, and not Arg.. Thiol protease involved in osteoclastic bone resorption and may participate partially in the disorder of bone remodeling. Displays potent endoprotease activity against fibrinogen at acid pH. May play an important role in extracellular matrix degradation. Involved in the release of thyroid hormone thyroxine (T4) by limited proteolysis of TG/thyroglobulin in the thyroid follicle lumen. This is Cathepsin K (CTSK) from Macaca fascicularis (Crab-eating macaque).